Consider the following 227-residue polypeptide: GFP-like non-fluorescent chromoprotein (227 aa).

Residues 63–65 (AYG) constitute a cross-link (5-imidazolinone (Ala-Gly)). Tyr-64 is subject to 2,3-didehydrotyrosine.

It belongs to the GFP family. As to quaternary structure, homotetramer. Post-translationally, contains a chromophore consisting of modified amino acid residues. The chromophore is formed by autocatalytic backbone condensation between Xaa-N and Gly-(N+2), and oxidation of Tyr-(N+1) to didehydrotyrosine. Maturation of the chromophore requires nothing other than molecular oxygen. The precise stereochemistry of the tyrosine has not been determined.

In terms of biological role, non-fluorescent pigment protein that is mauve in color. The wild-type form is non-fluorescent. The sequence is that of GFP-like non-fluorescent chromoprotein from Condylactis gigantea (Giant Caribbean anemone).